A 194-amino-acid polypeptide reads, in one-letter code: RNA polymerase II subunit A C-terminal domain phosphatase SSU72 like protein 2 (194 aa).

The protein belongs to the SSU72 phosphatase family.

It localises to the nucleus. The catalysed reaction is O-phospho-L-seryl-[protein] + H2O = L-seryl-[protein] + phosphate. It carries out the reaction O-phospho-L-threonyl-[protein] + H2O = L-threonyl-[protein] + phosphate. Functionally, protein phosphatase that catalyzes the dephosphorylation of the C-terminal domain of RNA polymerase II. Plays a role in RNA processing and termination. The protein is RNA polymerase II subunit A C-terminal domain phosphatase SSU72 like protein 2 of Homo sapiens (Human).